The sequence spans 345 residues: MRVTDFSFDLPDELIARYPMAQRNASRLLTLDGNTGTLVDKQFTDLLGMINPGDLMVFNNTRVIPARLFGQKASGGKLEILVERMLDDKRILAHVRSSKSPKVDSIIHLDGGYEMKMMARHDALFELQLLSELSILEVLEAVGHMPLPPYIDRPDEDADKERYQTVYNQNPGAVAAPTAGLHFDDAMLEALKAKGVNIAFVTLHVGAGTFQPVRVDNVLEHKMHSEWANVPQDVVDLIARTKAAGNRVVAVGTTSVRSLESAARASAGQLNAFSGDTDIFIYPGYQFQVVDAMVTNFHLPESTLIMLVSAFAGYEHVMAAYQHAIKQKYRFFSYGDAMFVTKKAH.

This sequence belongs to the QueA family. Monomer.

It localises to the cytoplasm. It catalyses the reaction 7-aminomethyl-7-carbaguanosine(34) in tRNA + S-adenosyl-L-methionine = epoxyqueuosine(34) in tRNA + adenine + L-methionine + 2 H(+). The protein operates within tRNA modification; tRNA-queuosine biosynthesis. Transfers and isomerizes the ribose moiety from AdoMet to the 7-aminomethyl group of 7-deazaguanine (preQ1-tRNA) to give epoxyqueuosine (oQ-tRNA). This chain is S-adenosylmethionine:tRNA ribosyltransferase-isomerase, found in Shewanella oneidensis (strain ATCC 700550 / JCM 31522 / CIP 106686 / LMG 19005 / NCIMB 14063 / MR-1).